The following is a 184-amino-acid chain: UPF0397 protein SA2477 (184 aa).

A run of 5 helical transmembrane segments spans residues 11–31 (VVAIGIGAAVFVILGRFVVIP), 44–64 (AFLALISAIFGPFAGLMTGLV), 77–97 (AWWSWVICSGIIGCLYGWIGL), 111–131 (MIYFNIGQIIANIICWALIAP), and 148–168 (QGVISAVLNIISVGIIGTILL).

It belongs to the UPF0397 family.

It is found in the cell membrane. This Staphylococcus aureus (strain N315) protein is UPF0397 protein SA2477.